We begin with the raw amino-acid sequence, 127 residues long: Small ribosomal subunit protein bS6 (127 aa).

Residues 102–127 are disordered; it reads IMQGAEKGKSSRKEKVDAEAEASEEA. Positions 107 to 119 are enriched in basic and acidic residues; that stretch reads EKGKSSRKEKVDA.

The protein belongs to the bacterial ribosomal protein bS6 family.

In terms of biological role, binds together with bS18 to 16S ribosomal RNA. In Coxiella burnetii (strain CbuK_Q154) (Coxiella burnetii (strain Q154)), this protein is Small ribosomal subunit protein bS6.